A 317-amino-acid polypeptide reads, in one-letter code: Transaldolase (317 aa).

Lys-126 serves as the catalytic Schiff-base intermediate with substrate.

The protein belongs to the transaldolase family. Type 1 subfamily. As to quaternary structure, homodimer.

It is found in the cytoplasm. The enzyme catalyses D-sedoheptulose 7-phosphate + D-glyceraldehyde 3-phosphate = D-erythrose 4-phosphate + beta-D-fructose 6-phosphate. The protein operates within carbohydrate degradation; pentose phosphate pathway; D-glyceraldehyde 3-phosphate and beta-D-fructose 6-phosphate from D-ribose 5-phosphate and D-xylulose 5-phosphate (non-oxidative stage): step 2/3. Transaldolase is important for the balance of metabolites in the pentose-phosphate pathway. The chain is Transaldolase from Burkholderia vietnamiensis (strain G4 / LMG 22486) (Burkholderia cepacia (strain R1808)).